Here is a 341-residue protein sequence, read N- to C-terminus: Phenylalanine--tRNA ligase alpha subunit (341 aa).

Glu-254 contributes to the Mg(2+) binding site.

Belongs to the class-II aminoacyl-tRNA synthetase family. Phe-tRNA synthetase alpha subunit type 1 subfamily. As to quaternary structure, tetramer of two alpha and two beta subunits. The cofactor is Mg(2+).

It is found in the cytoplasm. The catalysed reaction is tRNA(Phe) + L-phenylalanine + ATP = L-phenylalanyl-tRNA(Phe) + AMP + diphosphate + H(+). The protein is Phenylalanine--tRNA ligase alpha subunit (pheS) of Mycoplasma pneumoniae (strain ATCC 29342 / M129 / Subtype 1) (Mycoplasmoides pneumoniae).